The primary structure comprises 58 residues: Ikitoxin (58 aa).

An LCN-type CS-alpha/beta domain is found at 3-58 (VPGNYPLDKDGNTYKCFLLGENEECLNVCKLHGVQYGYCYASKCWCEYLEDDKDSV). 3 disulfides stabilise this stretch: Cys-18–Cys-41, Cys-27–Cys-46, and Cys-31–Cys-48.

In terms of tissue distribution, expressed by the venom gland.

The protein localises to the secreted. Its function is as follows. Beta toxins bind voltage-independently at site-4 of sodium channels (Nav) and shift the voltage of activation toward more negative potentials thereby affecting sodium channel activation and promoting spontaneous and repetitive firing. Does not produce effect when administered to blowfly and cabbage looper larvae. In mice, does not produce convulsions, tremors, increased ventilation nor death. The chain is Ikitoxin from Parabuthus transvaalicus (Transvaal thick-tailed scorpion).